The chain runs to 635 residues: tRNA 5-methylaminomethyl-2-thiouridine biosynthesis bifunctional protein MnmC (635 aa).

The tract at residues 1–231 (MPITPASLSF…KRQMLRGRYL (231 aa)) is tRNA (mnm(5)s(2)U34)-methyltransferase. Positions 249 to 635 (IGAGVAGTSI…RPARTLRGED (387 aa)) are FAD-dependent cmnm(5)s(2)U34 oxidoreductase.

This sequence in the N-terminal section; belongs to the methyltransferase superfamily. tRNA (mnm(5)s(2)U34)-methyltransferase family. The protein in the C-terminal section; belongs to the DAO family. FAD serves as cofactor.

The protein localises to the cytoplasm. The catalysed reaction is 5-aminomethyl-2-thiouridine(34) in tRNA + S-adenosyl-L-methionine = 5-methylaminomethyl-2-thiouridine(34) in tRNA + S-adenosyl-L-homocysteine + H(+). Catalyzes the last two steps in the biosynthesis of 5-methylaminomethyl-2-thiouridine (mnm(5)s(2)U) at the wobble position (U34) in tRNA. Catalyzes the FAD-dependent demodification of cmnm(5)s(2)U34 to nm(5)s(2)U34, followed by the transfer of a methyl group from S-adenosyl-L-methionine to nm(5)s(2)U34, to form mnm(5)s(2)U34. The polypeptide is tRNA 5-methylaminomethyl-2-thiouridine biosynthesis bifunctional protein MnmC (Azoarcus sp. (strain BH72)).